Consider the following 599-residue polypeptide: NADH-quinone oxidoreductase subunit C/D (599 aa).

The segment at 1-189 (MTDLTTHDLA…DPFVLTKQKE (189 aa)) is NADH dehydrogenase I subunit C. Residues 213 to 599 (DFMFLNLGPN…IDFVMSDVDR (387 aa)) are NADH dehydrogenase I subunit D.

This sequence in the N-terminal section; belongs to the complex I 30 kDa subunit family. It in the C-terminal section; belongs to the complex I 49 kDa subunit family. As to quaternary structure, NDH-1 is composed of 13 different subunits. Subunits NuoB, CD, E, F, and G constitute the peripheral sector of the complex.

It localises to the cell inner membrane. The enzyme catalyses a quinone + NADH + 5 H(+)(in) = a quinol + NAD(+) + 4 H(+)(out). Its function is as follows. NDH-1 shuttles electrons from NADH, via FMN and iron-sulfur (Fe-S) centers, to quinones in the respiratory chain. The immediate electron acceptor for the enzyme in this species is believed to be ubiquinone. Couples the redox reaction to proton translocation (for every two electrons transferred, four hydrogen ions are translocated across the cytoplasmic membrane), and thus conserves the redox energy in a proton gradient. The chain is NADH-quinone oxidoreductase subunit C/D from Pectobacterium carotovorum subsp. carotovorum (strain PC1).